The chain runs to 430 residues: Adenylosuccinate synthetase (430 aa).

Residues 12–18 (GDEGKGK) and 40–42 (GHT) contribute to the GTP site. Catalysis depends on Asp-13, which acts as the Proton acceptor. Mg(2+)-binding residues include Asp-13 and Gly-40. Residues 13 to 16 (DEGK), 38 to 41 (NAGH), Thr-130, Arg-144, Gln-224, Thr-239, and Arg-303 contribute to the IMP site. Catalysis depends on His-41, which acts as the Proton donor. 299–305 (ATTGRPR) lines the substrate pocket. GTP contacts are provided by residues Arg-305, 331–333 (KLD), and 413–415 (SVG).

The protein belongs to the adenylosuccinate synthetase family. As to quaternary structure, homodimer. The cofactor is Mg(2+).

The protein resides in the cytoplasm. The enzyme catalyses IMP + L-aspartate + GTP = N(6)-(1,2-dicarboxyethyl)-AMP + GDP + phosphate + 2 H(+). It functions in the pathway purine metabolism; AMP biosynthesis via de novo pathway; AMP from IMP: step 1/2. Functionally, plays an important role in the de novo pathway of purine nucleotide biosynthesis. Catalyzes the first committed step in the biosynthesis of AMP from IMP. In Trichlorobacter lovleyi (strain ATCC BAA-1151 / DSM 17278 / SZ) (Geobacter lovleyi), this protein is Adenylosuccinate synthetase.